Here is a 145-residue protein sequence, read N- to C-terminus: Large ribosomal subunit protein uL15 (145 aa).

Residues 1–57 (MKLNDLSPAPGSRREKHRPGRGIGSGLGKTGGRGHKGQTSRSGGTIAPGFEGGQQPL) are disordered. Gly residues predominate over residues 21-31 (RGIGSGLGKTG).

It belongs to the universal ribosomal protein uL15 family. Part of the 50S ribosomal subunit.

In terms of biological role, binds to the 23S rRNA. This chain is Large ribosomal subunit protein uL15, found in Pseudomonas fluorescens (strain Pf0-1).